The chain runs to 82 residues: Turripeptide IX-07 (82 aa).

The first 21 residues, 1–21 (MGFYMLLTVALLLTSLMNVEA), serve as a signal peptide directing secretion. Residues 22 to 39 (TPVNQAERSALEKSGLGN) constitute a propeptide that is removed on maturation. 3 disulfides stabilise this stretch: C48–C70, C55–C74, and C60–C81.

In terms of tissue distribution, expressed by the venom duct.

It localises to the secreted. The chain is Turripeptide IX-07 from Gemmula speciosa (Splendid gem-turris).